Reading from the N-terminus, the 323-residue chain is L-lactate dehydrogenase (323 aa).

NAD(+)-binding positions include V16, N37, and 81–82 (GA). Residues Q84, R90, and 122–125 (NPVD) each bind substrate. NAD(+) contacts are provided by residues 120-122 (ATN) and S145. 150–153 (DSAR) is a substrate binding site. Residue H177 is the Proton acceptor of the active site. At Y221 the chain carries Phosphotyrosine. T230 is a substrate binding site.

It belongs to the LDH/MDH superfamily. LDH family. Homotetramer.

The protein localises to the cytoplasm. The enzyme catalyses (S)-lactate + NAD(+) = pyruvate + NADH + H(+). Its pathway is fermentation; pyruvate fermentation to lactate; (S)-lactate from pyruvate: step 1/1. In terms of biological role, catalyzes the conversion of lactate to pyruvate. This chain is L-lactate dehydrogenase, found in Limosilactobacillus reuteri (Lactobacillus reuteri).